Here is a 373-residue protein sequence, read N- to C-terminus: Phospho-N-acetylmuramoyl-pentapeptide-transferase (373 aa).

11 helical membrane-spanning segments follow: residues 16-36 (WWTK…AASF), 46-66 (LLSL…SWGI), 93-113 (PTMG…FVSV), 120-140 (QLLA…FDDW), 157-177 (LLLQ…QHWI), 185-205 (LGIS…VFLA), 216-236 (LDGL…VQLM), 242-262 (GNPV…GFLM), 270-290 (VFMG…VAIL), 298-318 (LVMG…VWVF), and 350-369 (MVVR…GLLL).

The protein belongs to the glycosyltransferase 4 family. MraY subfamily. Requires Mg(2+) as cofactor.

Its subcellular location is the cell inner membrane. The catalysed reaction is UDP-N-acetyl-alpha-D-muramoyl-L-alanyl-gamma-D-glutamyl-meso-2,6-diaminopimeloyl-D-alanyl-D-alanine + di-trans,octa-cis-undecaprenyl phosphate = di-trans,octa-cis-undecaprenyl diphospho-N-acetyl-alpha-D-muramoyl-L-alanyl-D-glutamyl-meso-2,6-diaminopimeloyl-D-alanyl-D-alanine + UMP. Its pathway is cell wall biogenesis; peptidoglycan biosynthesis. Functionally, catalyzes the initial step of the lipid cycle reactions in the biosynthesis of the cell wall peptidoglycan: transfers peptidoglycan precursor phospho-MurNAc-pentapeptide from UDP-MurNAc-pentapeptide onto the lipid carrier undecaprenyl phosphate, yielding undecaprenyl-pyrophosphoryl-MurNAc-pentapeptide, known as lipid I. The sequence is that of Phospho-N-acetylmuramoyl-pentapeptide-transferase from Prochlorococcus marinus (strain MIT 9313).